The chain runs to 2322 residues: Protein sidekick homolog (2322 aa).

A signal peptide spans 1–26 (MNYRIFLLFCTTTVLWSVVSTQLVLG). Residues 27–2020 (KPPIFQNTGP…IPDDPFYTTW (1994 aa)) lie on the Extracellular side of the membrane. Ig-like C2-type domains are found at residues 28-105 (PPIF…AAIS), 217-319 (PSLQ…AYLT), and 324-397 (PVLK…ADMS). Intrachain disulfides connect cysteine 52/cysteine 94, cysteine 247/cysteine 301, and cysteine 345/cysteine 386. The N-linked (GlcNAc...) asparagine glycan is linked to asparagine 408. Ig-like C2-type domains are found at residues 450–545 (PFTS…VQVN) and 548–639 (SLIE…AMLQ). Cystine bridges form between cysteine 481-cysteine 529 and cysteine 569-cysteine 623. Residues asparagine 633 and asparagine 656 are each glycosylated (N-linked (GlcNAc...) asparagine). Fibronectin type-III domains follow at residues 646-752 (MPER…MPQQ), 757-854 (APRN…TAEG), 859-958 (APKN…TEED), 962-1056 (AVDE…VPPE), 1060-1155 (RPSM…TLQT), 1160-1255 (PSQR…TYES), 1260-1360 (SPRN…TLED), 1364-1458 (PPES…SSVR), 1464-1567 (APAP…TLPS), 1572-1672 (QPIS…VGYS), 1674-1774 (PKRN…LEDK), 1777-1873 (PVGV…SKDG), and 1908-2010 (QAKR…VPES). Positions 732 to 762 (SNKHGPGKPSLPSSSVTMPQQPPSAAPRNVA) are disordered. 4 N-linked (GlcNAc...) asparagine glycosylation sites follow: asparagine 808, asparagine 869, asparagine 933, and asparagine 1017. A compositionally biased stretch (basic and acidic residues) spans 1040–1049 (GDGPVEETKF). Positions 1040 to 1060 (GDGPVEETKFESGVPPELPGR) are disordered. N-linked (GlcNAc...) asparagine glycosylation occurs at asparagine 1108. The tract at residues 1139–1163 (GRGAPSEPSRTFETLQTNPETPSQR) is disordered. The span at 1146–1163 (PSRTFETLQTNPETPSQR) shows a compositional bias: polar residues. N-linked (GlcNAc...) asparagine glycosylation is found at asparagine 1615, asparagine 1677, and asparagine 1864. A disordered region spans residues 1916-1965 (EETENGYVSQRPRRNEIRGAKSAAQTSASSNSNRPTHPIGEWITLRPTDG). Positions 1935–1947 (AKSAAQTSASSNS) are enriched in low complexity. A helical membrane pass occupies residues 2021 to 2041 (WFMALVAMAAFVLIVIIIAIL). Topologically, residues 2042–2322 (CVTGSSAKYR…NLTAGFSSFV (281 aa)) are cytoplasmic. Disordered stretches follow at residues 2081 to 2114 (NMTR…SVLG), 2167 to 2254 (YVVS…ADDI), and 2276 to 2322 (MVRA…SSFV). Over residues 2092–2101 (PGTTQSWLSD) the composition is skewed to polar residues. The span at 2207-2223 (PSSSGGSQPQGSPQQQQ) shows a compositional bias: low complexity. Over residues 2227–2238 (DSFDEEDDVDDD) the composition is skewed to acidic residues. Polar residues-rich tracts occupy residues 2282–2302 (LTNQ…STSE) and 2310–2322 (ATPN…SSFV).

It belongs to the sidekick family.

The protein resides in the membrane. Its function is as follows. Cell adhesion protein. In Caenorhabditis briggsae, this protein is Protein sidekick homolog (rig-4).